The sequence spans 328 residues: MVKIAIDMMGGDDAPGIVLEAVEKAVNDFKDLEIILFGDQNQYTLNHERIEFRHCSEKIEMEDEPVRAIKRKKDSSMVRMAEAVKNGEADGCVSAGNTGALMSAGLFIVGRIKGVARPALVVTLPTIDGKGFVFLDVGANADAKPEHLLQYAQLGNIYAKKIRGIQNPKVSLLNIGTEPAKGNTLTKKSYQLLKDDQSFNFDGNIEAKTLMEGNTDVVVTDGYTGNMVLKNIEGTAKSIGKMLKETFLGSLKNKLAALVLKKDLDTFTKKMDYAEYGGSVLLGLDGTVVKAHGGSNARAFYSAIRQAKIAGDEKIVDIMRETVGGKDE.

Belongs to the PlsX family. Homodimer. Probably interacts with PlsY.

Its subcellular location is the cytoplasm. The enzyme catalyses a fatty acyl-[ACP] + phosphate = an acyl phosphate + holo-[ACP]. It functions in the pathway lipid metabolism; phospholipid metabolism. In terms of biological role, catalyzes the reversible formation of acyl-phosphate (acyl-PO(4)) from acyl-[acyl-carrier-protein] (acyl-ACP). This enzyme utilizes acyl-ACP as fatty acyl donor, but not acyl-CoA. The protein is Phosphate acyltransferase of Staphylococcus haemolyticus (strain JCSC1435).